A 216-amino-acid polypeptide reads, in one-letter code: Adenylate kinase (216 aa).

10-15 (GAGKGT) provides a ligand contact to ATP. Residues 30-59 (STGDIFRKNISEKTPLGVKAKEYMDKGQLV) are NMP. Residues Thr31, Arg36, 57–59 (QLV), 85–88 (GFPR), and Gln92 contribute to the AMP site. The LID stretch occupies residues 126 to 163 (GRRVCPSCGASYHIKFNPPKIEGLCDVCKKEVIQRKDD). Arg127 contacts ATP. Residues Cys130 and Cys133 each contribute to the Zn(2+) site. 136 to 137 (SY) is an ATP binding site. Zn(2+)-binding residues include Cys150 and Cys153. AMP-binding residues include Arg160 and Arg171. Gln199 is an ATP binding site.

The protein belongs to the adenylate kinase family. Monomer.

The protein localises to the cytoplasm. It carries out the reaction AMP + ATP = 2 ADP. It participates in purine metabolism; AMP biosynthesis via salvage pathway; AMP from ADP: step 1/1. In terms of biological role, catalyzes the reversible transfer of the terminal phosphate group between ATP and AMP. Plays an important role in cellular energy homeostasis and in adenine nucleotide metabolism. The protein is Adenylate kinase of Clostridium novyi (strain NT).